The primary structure comprises 347 residues: UDP-rhamnose/UDP-galactose transporter 1 (347 aa).

A run of 10 helical transmembrane segments spans residues 11-31 (AVSD…IIMA), 43-63 (FGFA…VGMV), 80-100 (LLWF…SLML), 103-123 (VGFY…LEWI), 132-152 (EVKA…VTDV), 159-179 (FICA…IGSL), 195-215 (APIQ…LLSG), 223-243 (MTYG…FCNI), 256-276 (SFQV…WLLF), and 285-305 (IAGM…VDIE).

It belongs to the TPT transporter family. TPT (TC 2.A.7.9) subfamily. Widely expressed in the whole plant.

It localises to the golgi apparatus membrane. Nucleotide-sugar transporter that transports UDP-rhamnose or UDP-galactose and UMP in a strict counter-exchange mode. This Arabidopsis thaliana (Mouse-ear cress) protein is UDP-rhamnose/UDP-galactose transporter 1.